The following is a 156-amino-acid chain: RNA polymerase sigma factor SigS (156 aa).

Positions 29–44 match the Polymerase core binding motif; the sequence is EYYQLLLIKMWQLSQI. The segment at residues 126-145 is a DNA-binding region (H-T-H motif); it reads QFEIAEIMSLSLSTIKLIKT.

It belongs to the sigma-70 factor family.

In terms of biological role, sigma factors are initiation factors that promote the attachment of RNA polymerase to specific initiation sites and are then released. Sigma-S contributes to the protection against external stress, thus playing a role in cellular fitness and survival. The chain is RNA polymerase sigma factor SigS (sigS) from Staphylococcus aureus (strain bovine RF122 / ET3-1).